Here is a 94-residue protein sequence, read N- to C-terminus: Cell division topological specificity factor (94 aa).

This sequence belongs to the MinE family.

Functionally, prevents the cell division inhibition by proteins MinC and MinD at internal division sites while permitting inhibition at polar sites. This ensures cell division at the proper site by restricting the formation of a division septum at the midpoint of the long axis of the cell. This is Cell division topological specificity factor from Alkalilimnicola ehrlichii (strain ATCC BAA-1101 / DSM 17681 / MLHE-1).